The following is a 251-amino-acid chain: uncharacterized protein (251 aa).

Residues 192-238 (CMMCVQRGDERVAITTPYTTDCGHTYCYACIMSRLKLVNNVSCPICK) form an RING-type zinc finger.

The protein localises to the cytoplasm. This is an uncharacterized protein from Schizosaccharomyces pombe (strain 972 / ATCC 24843) (Fission yeast).